The sequence spans 44 residues: Photosystem I reaction center subunit IX (44 aa).

The chain crosses the membrane as a helical span at residues 7–27 (YLSVAPVLSTLWFGALAGLLI).

Belongs to the PsaJ family.

It localises to the plastid. It is found in the chloroplast thylakoid membrane. May help in the organization of the PsaE and PsaF subunits. The polypeptide is Photosystem I reaction center subunit IX (Coffea arabica (Arabian coffee)).